Consider the following 600-residue polypeptide: tRNA(Ile)-lysidine synthase, chloroplastic (600 aa).

35 to 40 contacts ATP; that stretch reads SGGQDS.

The protein belongs to the tRNA(Ile)-lysidine synthase family.

It is found in the plastid. It localises to the chloroplast. It catalyses the reaction cytidine(34) in tRNA(Ile2) + L-lysine + ATP = lysidine(34) in tRNA(Ile2) + AMP + diphosphate + H(+). Functionally, ligates lysine onto the cytidine present at position 34 of the AUA codon-specific tRNA(Ile) that contains the anticodon CAU, in an ATP-dependent manner. Cytidine is converted to lysidine, thus changing the amino acid specificity of the tRNA from methionine to isoleucine. This Tupiella akineta (Green alga) protein is tRNA(Ile)-lysidine synthase, chloroplastic.